Here is a 623-residue protein sequence, read N- to C-terminus: Leucine aminopeptidase 2 (623 aa).

The disordered stretch occupies residues 1–23; sequence MRRCTKNSRSTNPPRDPNTLSNY. Residues 7 to 23 show a composition bias toward polar residues; it reads NSRSTNPPRDPNTLSNY. A peptide-binding positions include 145 to 147 and 277 to 282; these read QCQ and PYGGME. H306 is a Zn(2+) binding site. The active-site Proton acceptor is E307. Zn(2+)-binding residues include H310 and E329. Y394 functions as the Proton donor in the catalytic mechanism.

This sequence belongs to the peptidase M1 family. Requires Zn(2+) as cofactor.

It localises to the cytoplasm. It is found in the nucleus. The catalysed reaction is an epoxide + H2O = an ethanediol. In terms of biological role, aminopeptidase that preferentially cleaves di- and tripeptides. Also has low epoxide hydrolase activity (in vitro). Can hydrolyze the epoxide leukotriene LTA(4) but it forms preferentially 5,6-dihydroxy-7,9,11,14-eicosatetraenoic acid rather than the cytokine leukotriene B(4) as the product compared to the homologous mammalian enzyme (in vitro). This Ajellomyces capsulatus (strain NAm1 / WU24) (Darling's disease fungus) protein is Leucine aminopeptidase 2.